Here is a 277-residue protein sequence, read N- to C-terminus: Large ribosomal subunit protein uL2 (277 aa).

The disordered stretch occupies residues 219-277 (TVRGSVMNPNDHPHGGGEGKAPVGRKAPSTPWGKPALGLKTRNKKAKSDKLIVRRRNEK). Over residues 264 to 277 (AKSDKLIVRRRNEK) the composition is skewed to basic and acidic residues.

Belongs to the universal ribosomal protein uL2 family. Part of the 50S ribosomal subunit. Forms a bridge to the 30S subunit in the 70S ribosome.

Its function is as follows. One of the primary rRNA binding proteins. Required for association of the 30S and 50S subunits to form the 70S ribosome, for tRNA binding and peptide bond formation. It has been suggested to have peptidyltransferase activity; this is somewhat controversial. Makes several contacts with the 16S rRNA in the 70S ribosome. This chain is Large ribosomal subunit protein uL2, found in Streptococcus pneumoniae serotype 2 (strain D39 / NCTC 7466).